Reading from the N-terminus, the 194-residue chain is PBAN-type neuropeptides (194 aa).

An N-terminal signal peptide occupies residues 1-23; it reads MFNQTQLFVFLAVFTTSSVLGNN. Leu47 is modified (leucine amide). Positions 51–94 are excised as a propeptide; sequence SLRISTEDNRQAFFKLLEAADALKYYYDQLPYEMQADEPETRVT. Leucine amide is present on residues Leu103, Leu123, Leu159, and Leu169. Residues 172–194 constitute a propeptide that is removed on maturation; sequence ELSYDMMPNKIRVVRSTNKTRST.

It belongs to the pyrokinin family. As to expression, expressed in the subesophageal ganglions. Not found in corpora cardiaca, corpora allata and thoracic ganglia.

The protein localises to the secreted. In terms of biological role, a hormone that controls sex pheromone production in females and pheromone responsiveness in male. Also mediates visceral muscle contractile activity (myotropic activity). This chain is PBAN-type neuropeptides, found in Helicoverpa zea (Corn earworm moth).